We begin with the raw amino-acid sequence, 166 residues long: CDP-archaeol synthase (166 aa).

5 helical membrane passes run 7–27, 55–75, 78–98, 116–136, and 138–158; these read LLLS…GPFI, LIVA…FFTA, TLIS…GAFI, LDFV…ITWY, and FLFI…VAYL.

The protein belongs to the CDP-archaeol synthase family. Requires Mg(2+) as cofactor.

It is found in the cell membrane. The enzyme catalyses 2,3-bis-O-(geranylgeranyl)-sn-glycerol 1-phosphate + CTP + H(+) = CDP-2,3-bis-O-(geranylgeranyl)-sn-glycerol + diphosphate. Its pathway is membrane lipid metabolism; glycerophospholipid metabolism. Catalyzes the formation of CDP-2,3-bis-(O-geranylgeranyl)-sn-glycerol (CDP-archaeol) from 2,3-bis-(O-geranylgeranyl)-sn-glycerol 1-phosphate (DGGGP) and CTP. This reaction is the third ether-bond-formation step in the biosynthesis of archaeal membrane lipids. The chain is CDP-archaeol synthase from Saccharolobus islandicus (strain L.S.2.15 / Lassen #1) (Sulfolobus islandicus).